Consider the following 513-residue polypeptide: Keratin, type II cuticular Hb2 (513 aa).

The interval 1–120 (MSYHSFQPGS…PTVQRVKRDE (120 aa)) is head. The region spanning 120–431 (EKEQIKCLNN…RLLEGEEHRL (312 aa)) is the IF rod domain. The tract at residues 121-155 (KEQIKCLNNRFASFINKVRFLEQKNKLLETKWNFM) is coil 1A. The segment at 156–165 (QQQRCCQTNI) is linker 1. The coil 1B stretch occupies residues 166–266 (EPIFEGYISA…YEEEICLLQS (101 aa)). The tract at residues 267–283 (QISETSVIVKMDNSREL) is linker 12. The interval 284 to 427 (DVDGIIAEIK…ATYRRLLEGE (144 aa)) is coil 2. Residues 428-513 (EHRLCEGIGP…AGGSSPSHKH (86 aa)) are tail.

It belongs to the intermediate filament family. As to quaternary structure, heterotetramer of two type I and two type II keratins.

The polypeptide is Keratin, type II cuticular Hb2 (KRT82) (Homo sapiens (Human)).